The sequence spans 187 residues: MVYPVVEAESRVGFGKGFARRARAAGKIPAVAYGLKRAPEHVLLPAAQMSLIMRRANALLQLKIDARESLVLIKQVQRDRIRNIIEHLDMLFVNEDDAVTIRVPLRFVGQSYAGTVTSVENYSVAVTLQVSQIPEALVVDVSGLQAGRRIFASDIALPDGALLVSPPRLLIAKVDPVRRATQESPPD.

It belongs to the bacterial ribosomal protein bL25 family. CTC subfamily. As to quaternary structure, part of the 50S ribosomal subunit; part of the 5S rRNA/L5/L18/L25 subcomplex. Contacts the 5S rRNA. Binds to the 5S rRNA independently of L5 and L18.

Functionally, this is one of the proteins that binds to the 5S RNA in the ribosome where it forms part of the central protuberance. The sequence is that of Large ribosomal subunit protein bL25 from Tropheryma whipplei (strain Twist) (Whipple's bacillus).